Consider the following 483-residue polypeptide: MENAISTVPEFLPALPEILLAVGAMALLMYGVFRKDCDARETSLGALALFALVGAFLIIEPNAYVETFGGMFVIDGFTKFMKLLILLAAAAAIVMSLTFIRREGMDRFEYPVLIILATLGMFMMVSANGLISLYMGLELQSLSLYVIAAFHRDNTRATEAGLKYFVLGALASGMLLYGASLIYGFTGSVQFGSIATVLQADGTNIGVIFGIVFVLAGLAFKISAVPFHMWTPDVYEGAPTPVTAFFAGAPKVAAMALILRVLFVAFPSMESEWQQIIVFIAIASMVLGAFAAIGQSNIKRLMAYSSISHMGFAMVGLAAGTPEGVRGVLIYLVIYVVMNAGVFCCILAMQRKEGYVENISDLAGLSRNQPMVAFMMAMLMFSLAGVPPLAGFFGKFYVFMAAVEAGLYPLAVIGVLASVVGAFYYLRIVKIMYFDEAAEPFIQPMPGELTAVLGISGVFTLFFFVYPAPLILASQAAVRALLP.

Helical transmembrane passes span 13 to 33, 45 to 65, 80 to 100, 111 to 131, 165 to 185, 205 to 225, 244 to 264, 276 to 296, 301 to 321, 328 to 348, 373 to 393, 407 to 429, and 452 to 472; these read PALPEILLAVGAMALLMYGVF, GALALFALVGAFLIIEPNAYV, FMKLLILLAAAAAIVMSLTFI, PVLIILATLGMFMMVSANGLI, FVLGALASGMLLYGASLIYGF, IGVIFGIVFVLAGLAFKISAV, AFFAGAPKVAAMALILRVLFV, IIVFIAIASMVLGAFAAIGQS, LMAYSSISHMGFAMVGLAAGT, VLIYLVIYVVMNAGVFCCILA, AFMMAMLMFSLAGVPPLAGFF, LYPLAVIGVLASVVGAFYYLRIV, and VLGISGVFTLFFFVYPAPLIL.

This sequence belongs to the complex I subunit 2 family. As to quaternary structure, NDH-1 is composed of 14 different subunits. Subunits NuoA, H, J, K, L, M, N constitute the membrane sector of the complex.

It localises to the cell inner membrane. It catalyses the reaction a quinone + NADH + 5 H(+)(in) = a quinol + NAD(+) + 4 H(+)(out). Its function is as follows. NDH-1 shuttles electrons from NADH, via FMN and iron-sulfur (Fe-S) centers, to quinones in the respiratory chain. The immediate electron acceptor for the enzyme in this species is believed to be ubiquinone. Couples the redox reaction to proton translocation (for every two electrons transferred, four hydrogen ions are translocated across the cytoplasmic membrane), and thus conserves the redox energy in a proton gradient. This is NADH-quinone oxidoreductase subunit N from Parvibaculum lavamentivorans (strain DS-1 / DSM 13023 / NCIMB 13966).